The primary structure comprises 304 residues: MLWELYAFVFAASVVFNFVGIVANLFIIVIISKTWVKSHKISSSDKILFSLAITRFLTLGLFLLNTVYIATNTGRSVYFSTFFLLCWKFLDSNSLWLVTFLNCLYCVKITHFQHPVFLLLKRTVSMKTTSLLLACLLISAFTTLLYFVLTQISRFPEHIIGRNDTLFDVSDGILTLAASLILSSLLQFLLNVTFASLLIHSLRRHVQKMQRNRSSFWNPQTEAHVGAMRLMICFLVLYIPYSIAALLYFPSYMRKNLRAQAACMIITAAYPPGHSILLIITHHKLKAKAKKICCFYKLRDFVSN.

Residues 1–10 (MLWELYAFVF) lie on the Extracellular side of the membrane. A helical membrane pass occupies residues 11–31 (AASVVFNFVGIVANLFIIVII). Residues 32 to 46 (SKTWVKSHKISSSDK) are Cytoplasmic-facing. The chain crosses the membrane as a helical span at residues 47–67 (ILFSLAITRFLTLGLFLLNTV). Residues 68–80 (YIATNTGRSVYFS) lie on the Extracellular side of the membrane. Residues 81–101 (TFFLLCWKFLDSNSLWLVTFL) traverse the membrane as a helical segment. Residues 102-128 (NCLYCVKITHFQHPVFLLLKRTVSMKT) are Cytoplasmic-facing. The chain crosses the membrane as a helical span at residues 129-149 (TSLLLACLLISAFTTLLYFVL). At 150–171 (TQISRFPEHIIGRNDTLFDVSD) the chain is on the extracellular side. The N-linked (GlcNAc...) asparagine glycan is linked to Asn163. A helical membrane pass occupies residues 172-192 (GILTLAASLILSSLLQFLLNV). Over 193–229 (TFASLLIHSLRRHVQKMQRNRSSFWNPQTEAHVGAMR) the chain is Cytoplasmic. A helical membrane pass occupies residues 230–250 (LMICFLVLYIPYSIAALLYFP). The Extracellular portion of the chain corresponds to 251–260 (SYMRKNLRAQ). The helical transmembrane segment at 261-281 (AACMIITAAYPPGHSILLIIT) threads the bilayer. The Cytoplasmic portion of the chain corresponds to 282 to 304 (HHKLKAKAKKICCFYKLRDFVSN).

The protein belongs to the G-protein coupled receptor T2R family. As to expression, expressed in tongue, stomach and duodenum.

The protein resides in the membrane. It localises to the cell projection. Its subcellular location is the cilium membrane. Functionally, gustducin-coupled receptor implicated in the perception of bitter compounds in the oral cavity and the gastrointestinal tract. Signals through PLCB2 and the calcium-regulated cation channel TRPM5. In airway epithelial cells, binding of denatonium increases the intracellular calcium ion concentration and stimulates ciliary beat frequency. This chain is Taste receptor type 2 member 4, found in Rattus norvegicus (Rat).